We begin with the raw amino-acid sequence, 338 residues long: RNA 3'-terminal phosphate cyclase (338 aa).

ATP is bound by residues Gln103 and 283-287 (YLADQ). The active-site Tele-AMP-histidine intermediate is His308.

This sequence belongs to the RNA 3'-terminal cyclase family. Type 1 subfamily.

Its subcellular location is the cytoplasm. The enzyme catalyses a 3'-end 3'-phospho-ribonucleotide-RNA + ATP = a 3'-end 2',3'-cyclophospho-ribonucleotide-RNA + AMP + diphosphate. Its function is as follows. Catalyzes the conversion of 3'-phosphate to a 2',3'-cyclic phosphodiester at the end of RNA. The mechanism of action of the enzyme occurs in 3 steps: (A) adenylation of the enzyme by ATP; (B) transfer of adenylate to an RNA-N3'P to produce RNA-N3'PP5'A; (C) and attack of the adjacent 2'-hydroxyl on the 3'-phosphorus in the diester linkage to produce the cyclic end product. The biological role of this enzyme is unknown but it is likely to function in some aspects of cellular RNA processing. The sequence is that of RNA 3'-terminal phosphate cyclase from Shigella boydii serotype 4 (strain Sb227).